Reading from the N-terminus, the 356-residue chain is Carminomycin 4-O-methyltransferase DnrK (356 aa).

R153 is an S-adenosyl-L-methionine binding site. D163 is a substrate binding site. S-adenosyl-L-methionine-binding positions include G187, E210, 237–238 (DF), and S252. Substrate contacts are provided by N257 and R303.

This sequence belongs to the class I-like SAM-binding methyltransferase superfamily. Cation-independent O-methyltransferase family. As to quaternary structure, homodimer and homotetramer in equilibrium.

It catalyses the reaction carminomycin + S-adenosyl-L-methionine = daunorubicin + S-adenosyl-L-homocysteine + H(+). The protein operates within antibiotic biosynthesis; daunorubicin biosynthesis. It functions in the pathway antibiotic biosynthesis; carminomycin biosynthesis. In terms of biological role, involved in the biosynthesis of the anthracyclines carminomycin and daunorubicin (daunomycin) which are aromatic polyketide antibiotics that exhibit high cytotoxicity and are widely applied in the chemotherapy of a variety of cancers. In vivo, catalyzes the transfer of a methyl group from S-adenosyl-L-methionine to the 4-O-position of carminomycin to form daunorubicin. In vitro, it also methylates the anthracyclines rhodomycin D (10-carbomethoxy-13-deoxycarminomycin) and 13-deoxy-carminomycin at the 4-hydroxyl position. It is quite specific with respect to the length of the carbohydrate chain at the C7 position, but it can accept substrates with bulky substituent at C10 position. This Streptomyces peucetius protein is Carminomycin 4-O-methyltransferase DnrK (dnrK).